Consider the following 235-residue polypeptide: Ribosomal RNA small subunit methyltransferase G (235 aa).

S-adenosyl-L-methionine contacts are provided by residues Gly-74, Leu-79, 124–125 (AE), and Arg-142. Positions 211 to 235 (RRRAAKPGRNKSGRTARSRGRTGRR) are disordered. A compositionally biased stretch (basic residues) spans 213 to 235 (RAAKPGRNKSGRTARSRGRTGRR).

Belongs to the methyltransferase superfamily. RNA methyltransferase RsmG family.

It localises to the cytoplasm. In terms of biological role, specifically methylates the N7 position of guanine in position 518 of 16S rRNA. The polypeptide is Ribosomal RNA small subunit methyltransferase G (Mycolicibacterium smegmatis (strain ATCC 700084 / mc(2)155) (Mycobacterium smegmatis)).